Reading from the N-terminus, the 603-residue chain is Elongation factor 4 (603 aa).

The tr-type G domain maps to 2–184 (NHIRNFSIIA…AIVHKMPAPR (183 aa)). GTP-binding positions include 14–19 (DHGKST) and 131–134 (NKMD).

This sequence belongs to the TRAFAC class translation factor GTPase superfamily. Classic translation factor GTPase family. LepA subfamily.

The protein resides in the cell inner membrane. It catalyses the reaction GTP + H2O = GDP + phosphate + H(+). In terms of biological role, required for accurate and efficient protein synthesis under certain stress conditions. May act as a fidelity factor of the translation reaction, by catalyzing a one-codon backward translocation of tRNAs on improperly translocated ribosomes. Back-translocation proceeds from a post-translocation (POST) complex to a pre-translocation (PRE) complex, thus giving elongation factor G a second chance to translocate the tRNAs correctly. Binds to ribosomes in a GTP-dependent manner. In Variovorax paradoxus (strain S110), this protein is Elongation factor 4.